We begin with the raw amino-acid sequence, 266 residues long: Large ribosomal subunit protein uL4 (266 aa).

Belongs to the universal ribosomal protein uL4 family. In terms of assembly, part of the 50S ribosomal subunit.

In terms of biological role, one of the primary rRNA binding proteins, this protein initially binds near the 5'-end of the 23S rRNA. It is important during the early stages of 50S assembly. It makes multiple contacts with different domains of the 23S rRNA in the assembled 50S subunit and ribosome. Functionally, forms part of the polypeptide exit tunnel. The protein is Large ribosomal subunit protein uL4 of Sulfurisphaera tokodaii (strain DSM 16993 / JCM 10545 / NBRC 100140 / 7) (Sulfolobus tokodaii).